A 132-amino-acid chain; its full sequence is Protein LH2 (132 aa).

This is Protein LH2 from Pantherophis guttatus (Corn snake).